The primary structure comprises 161 residues: S-ribosylhomocysteine lyase (161 aa).

Fe cation contacts are provided by His-57, His-61, and Cys-124.

The protein belongs to the LuxS family. As to quaternary structure, homodimer. It depends on Fe cation as a cofactor.

It carries out the reaction S-(5-deoxy-D-ribos-5-yl)-L-homocysteine = (S)-4,5-dihydroxypentane-2,3-dione + L-homocysteine. Its function is as follows. Involved in the synthesis of autoinducer 2 (AI-2) which is secreted by bacteria and is used to communicate both the cell density and the metabolic potential of the environment. The regulation of gene expression in response to changes in cell density is called quorum sensing. Catalyzes the transformation of S-ribosylhomocysteine (RHC) to homocysteine (HC) and 4,5-dihydroxy-2,3-pentadione (DPD). This Macrococcus caseolyticus (strain JCSC5402) (Macrococcoides caseolyticum) protein is S-ribosylhomocysteine lyase.